A 449-amino-acid chain; its full sequence is Glutamyl-tRNA reductase (449 aa).

Substrate is bound by residues 49–52 (TCNR), S109, 114–116 (ETQ), and Q120. Catalysis depends on C50, which acts as the Nucleophile. 189 to 194 (GAGKMS) serves as a coordination point for NADP(+). The disordered stretch occupies residues 427-449 (NFTHPREEMEESDEKRSYCGESR).

Belongs to the glutamyl-tRNA reductase family. As to quaternary structure, homodimer.

The enzyme catalyses (S)-4-amino-5-oxopentanoate + tRNA(Glu) + NADP(+) = L-glutamyl-tRNA(Glu) + NADPH + H(+). The protein operates within porphyrin-containing compound metabolism; protoporphyrin-IX biosynthesis; 5-aminolevulinate from L-glutamyl-tRNA(Glu): step 1/2. Catalyzes the NADPH-dependent reduction of glutamyl-tRNA(Glu) to glutamate 1-semialdehyde (GSA). This Carboxydothermus hydrogenoformans (strain ATCC BAA-161 / DSM 6008 / Z-2901) protein is Glutamyl-tRNA reductase.